Reading from the N-terminus, the 640-residue chain is 1-deoxy-D-xylulose-5-phosphate synthase (640 aa).

Thiamine diphosphate contacts are provided by residues histidine 78 and 119–121 (GHS). Aspartate 151 contributes to the Mg(2+) binding site. Thiamine diphosphate is bound by residues 152-153 (GA), asparagine 180, tyrosine 289, and glutamate 371. A Mg(2+)-binding site is contributed by asparagine 180.

Belongs to the transketolase family. DXPS subfamily. As to quaternary structure, homodimer. Requires Mg(2+) as cofactor. Thiamine diphosphate serves as cofactor.

The enzyme catalyses D-glyceraldehyde 3-phosphate + pyruvate + H(+) = 1-deoxy-D-xylulose 5-phosphate + CO2. It participates in metabolic intermediate biosynthesis; 1-deoxy-D-xylulose 5-phosphate biosynthesis; 1-deoxy-D-xylulose 5-phosphate from D-glyceraldehyde 3-phosphate and pyruvate: step 1/1. Its function is as follows. Catalyzes the acyloin condensation reaction between C atoms 2 and 3 of pyruvate and glyceraldehyde 3-phosphate to yield 1-deoxy-D-xylulose-5-phosphate (DXP). The sequence is that of 1-deoxy-D-xylulose-5-phosphate synthase from Bartonella henselae (strain ATCC 49882 / DSM 28221 / CCUG 30454 / Houston 1) (Rochalimaea henselae).